The following is a 218-amino-acid chain: Octanoyltransferase (218 aa).

Residues 32–214 (VLTADEIWLV…HFTQLLGYND (183 aa)) form the BPL/LPL catalytic domain. Residues 71 to 78 (RGGQITYH), 143 to 145 (SLG), and 156 to 158 (GLA) each bind substrate. Catalysis depends on cysteine 174, which acts as the Acyl-thioester intermediate.

It belongs to the LipB family.

The protein resides in the cytoplasm. The enzyme catalyses octanoyl-[ACP] + L-lysyl-[protein] = N(6)-octanoyl-L-lysyl-[protein] + holo-[ACP] + H(+). It functions in the pathway protein modification; protein lipoylation via endogenous pathway; protein N(6)-(lipoyl)lysine from octanoyl-[acyl-carrier-protein]: step 1/2. In terms of biological role, catalyzes the transfer of endogenously produced octanoic acid from octanoyl-acyl-carrier-protein onto the lipoyl domains of lipoate-dependent enzymes. Lipoyl-ACP can also act as a substrate although octanoyl-ACP is likely to be the physiological substrate. In Histophilus somni (strain 2336) (Haemophilus somnus), this protein is Octanoyltransferase.